Consider the following 1110-residue polypeptide: Ribosome assembly protein 1 (1110 aa).

The 246-residue stretch at 17-262 (SCIRNICIVA…QKLGAKRENL (246 aa)) folds into the tr-type G domain. GTP is bound by residues 26-33 (AHVDHGKT), 102-106 (DSPGH), and 156-159 (NKID). Residue Ser-431 is modified to Phosphoserine.

It belongs to the TRAFAC class translation factor GTPase superfamily. Classic translation factor GTPase family.

Its subcellular location is the cytoplasm. It carries out the reaction GTP + H2O = GDP + phosphate + H(+). With respect to regulation, GTPase activity is stimulated in the presence of 60S subunits. In terms of biological role, GTPase involved in the biogenesis of the 60S ribosomal subunit and translational activation of ribosomes. Together with SDO1, may trigger the GTP-dependent release of TIF6 from 60S pre-ribosomes in the cytoplasm, thereby activating ribosomes for translation competence by allowing 80S ribosome assembly and facilitating TIF6 recycling to the nucleus, where it is required for 60S rRNA processing and nuclear export. Inhibits GTPase activity of ribosome-bound EF-2. This is Ribosome assembly protein 1 (RIA1) from Saccharomyces cerevisiae (strain ATCC 204508 / S288c) (Baker's yeast).